Here is a 549-residue protein sequence, read N- to C-terminus: ATP synthase subunit alpha (549 aa).

ATP is bound at residue 172-179 (GDRKTGKT). The segment at 513-549 (SSTGESVVPDEHVEAMDEEDLGKESVKVKKPAPQKKK) is disordered. Over residues 540 to 549 (VKKPAPQKKK) the composition is skewed to basic residues.

The protein belongs to the ATPase alpha/beta chains family. F-type ATPases have 2 components, CF(1) - the catalytic core - and CF(0) - the membrane proton channel. CF(1) has five subunits: alpha(3), beta(3), gamma(1), delta(1), epsilon(1). CF(0) has three main subunits: a(1), b(2) and c(9-12). The alpha and beta chains form an alternating ring which encloses part of the gamma chain. CF(1) is attached to CF(0) by a central stalk formed by the gamma and epsilon chains, while a peripheral stalk is formed by the delta and b chains.

It is found in the cell membrane. The catalysed reaction is ATP + H2O + 4 H(+)(in) = ADP + phosphate + 5 H(+)(out). Produces ATP from ADP in the presence of a proton gradient across the membrane. The alpha chain is a regulatory subunit. In Mycobacterium marinum (strain ATCC BAA-535 / M), this protein is ATP synthase subunit alpha.